Consider the following 1491-residue polypeptide: Copper-transporting ATPase 1 (1491 aa).

Topologically, residues 1–644 are cytoplasmic; that stretch reads MEPSVDANSI…KREIKQWRGS (644 aa). HMA domains lie at 8–74 and 85–151; these read NSIT…FDAL and TNTV…LDMG. Cu(+) contacts are provided by T18, C19, and C22. A Phosphothreonine modification is found at T152. The region spanning 171-237 is the HMA 3 domain; the sequence is VMLKMKVEGM…QIEAVGFPAF (67 aa). Cu(+)-binding residues include C182 and C185. S270 is subject to Phosphoserine. The 67-residue stretch at 277-343 folds into the HMA 4 domain; it reads STTMFTIEGM…AIEAISPGQY (67 aa). Residues C288 and C291 each contribute to the Cu(+) site. Position 327 is a phosphothreonine (T327). A phosphoserine mark is found at S339, S353, S357, and S362. HMA domains follow at residues 377–443, 479–545, and 555–621; these read QEAV…FDAA, NKCY…FGAM, and GILE…FEAS. 6 residues coordinate Cu(+): C388, C391, C490, C493, C566, and C569. Residues 645 to 666 traverse the membrane as a helical segment; sequence FLVSLFFCIPVMGLMVYMMVMD. The Extracellular segment spans residues 667–705; that stretch reads HHLATLHHNQNMSNEEMINMHSAMFLERQILPGLSIMNL. N-linked (GlcNAc...) asparagine glycosylation is present at N677. The helical transmembrane segment at 706 to 725 threads the bilayer; that stretch reads LSLLLCLPVQFCGGWYFYIQ. Residues 726-732 are Cytoplasmic-facing; it reads AYKALKH. Residues 733 to 753 form a helical membrane-spanning segment; sequence KTANMDVLIVLATTIAFAYSL. Residues 754–772 are Extracellular-facing; it reads VILLVAMFERAKVNPITFF. A helical membrane pass occupies residues 773–793; that stretch reads DTPPMLFVFIALGRWLEHIAK. Topologically, residues 794–926 are cytoplasmic; sequence GKTSEALAKL…SKAPIQQFAD (133 aa). Residues 927 to 950 form a helical membrane-spanning segment; that stretch reads KLSGYFVPFIVLVSIVTLLVWIII. Over 951-980 the chain is Extracellular; sequence GFQNFEIVETYFPGYNRSISRTETIIRFAF. N-linked (GlcNAc...) asparagine glycosylation is present at N966. A helical transmembrane segment spans residues 981-1002; it reads QASITVLCIACPCSLGLATPTA. Residues 1003 to 1347 lie on the Cytoplasmic side of the membrane; that stretch reads VMVGTGVGAQ…LSRKTVKRIR (345 aa). Catalysis depends on D1035, which acts as the 4-aspartylphosphate intermediate. ATP is bound at residue E1072. Residue T1203 is modified to Phosphothreonine. Residues D1292 and D1296 each contribute to the Mg(2+) site. Residues 1348 to 1365 traverse the membrane as a helical segment; sequence INFVFALIYNLVGIPIAA. Residues 1366–1376 lie on the Extracellular side of the membrane; that stretch reads GVFLPIGLVLQ. Residues 1377–1396 form a helical membrane-spanning segment; it reads PWMGSAAMAASSVSVVLSSL. Topologically, residues 1397-1491 are cytoplasmic; sequence FLKLYRKPTY…DFREDDDTTL (95 aa). S1421, S1423, S1451, S1454, and S1457 each carry phosphoserine. Positions 1458–1459 match the Endocytosis signal motif; the sequence is LL. 4 positions are modified to phosphoserine: S1460, S1464, S1467, and S1477. Residues 1477–1491 are PDZD11-binding; sequence SLLVGDFREDDDTTL. The Endocytosis signal motif lies at 1478–1479; the sequence is LL.

Belongs to the cation transport ATPase (P-type) (TC 3.A.3) family. Type IB subfamily. In terms of assembly, monomer. Interacts with PDZD11. Interacts with ATOX1 and COMMD1. Interacts with TYRP1. Directly interacts with SOD3; this interaction is copper-dependent and is required for SOD3 activity. In terms of tissue distribution, widely expressed. Highly expressed in pituitary endocrine cells. Expressed in melanocytes (at protein level). Expressed in motor neuron (at protein level). Expressed in hippocampal neuron (at protein level). In the kidney, it is detected in the proximal and distal tubules (at protein level). Expressed in aorta (at protein level).

Its subcellular location is the golgi apparatus. It localises to the trans-Golgi network membrane. The protein localises to the cell membrane. The protein resides in the melanosome membrane. It is found in the early endosome membrane. Its subcellular location is the cell projection. It localises to the axon. The protein localises to the dendrite. The protein resides in the postsynaptic density. The catalysed reaction is Cu(+)(in) + ATP + H2O = Cu(+)(out) + ADP + phosphate + H(+). Its function is as follows. ATP-driven copper (Cu(+)) ion pump that plays an important role in intracellular copper ion homeostasis. Within a catalytic cycle, acquires Cu(+) ion from donor protein on the cytoplasmic side of the membrane and delivers it to acceptor protein on the lumenal side. The transfer of Cu(+) ion across the membrane is coupled to ATP hydrolysis and is associated with a transient phosphorylation that shifts the pump conformation from inward-facing to outward-facing state. Under physiological conditions, at low cytosolic copper concentration, it is localized at the trans-Golgi network (TGN) where it transfers Cu(+) ions to cuproenzymes of the secretory pathway. Upon elevated cytosolic copper concentrations, it relocalizes to the plasma membrane where it is responsible for the export of excess Cu(+) ions. May play a dual role in neuron function and survival by regulating cooper efflux and neuronal transmission at the synapse as well as by supplying Cu(+) ions to enzymes such as PAM, TYR and SOD3. In the melanosomes of pigmented cells, provides copper cofactor to TYR to form an active TYR holoenzyme for melanin biosynthesis. The sequence is that of Copper-transporting ATPase 1 from Mus musculus (Mouse).